Reading from the N-terminus, the 493-residue chain is BICD family-like cargo adapter 2 (493 aa).

Coiled-coil stretches lie at residues 56–275 (ELGK…ELHM) and 365–431 (MQHV…LLST).

Belongs to the BICDR family.

This chain is BICD family-like cargo adapter 2 (bicdl2), found in Xenopus laevis (African clawed frog).